The chain runs to 465 residues: FAD-dependent monooxygenase olcE (465 aa).

A helical transmembrane segment spans residues Ile9 to Ile29. Residues Glu35, Gly49, Arg108, Asp308, and Ala321 each contribute to the FAD site.

The protein belongs to the paxM FAD-dependent monooxygenase family. FAD serves as cofactor.

The protein localises to the membrane. Its pathway is secondary metabolite biosynthesis; terpenoid biosynthesis. In terms of biological role, FAD-dependent monooxygenase; part of the gene cluster that mediates the biosynthesis of 15-deoxyoxalicine B. The first step of the pathway is the synthesis of nicotinyl-CoA from nicotinic acid by the nicotinic acid-CoA ligase olcI. Nicotinyl-CoA is then a substrate of polyketide synthase olcA to produce 4-hydroxy-6-(3-pyridinyl)-2H-pyran-2-one (HPPO) which is further prenylated by the polyprenyl transferase olcH to yield geranylgeranyl-HPPO. Geranylgeranyl pyrophosphate is provided by the cluster-specific geranylgeranyl pyrophosphate synthase olcC. The FAD-dependent monooxygenase olcE catalyzes the epoxidation of geranylgeranyl-HPPO and the terpene cyclase olcD catalyzes the cyclization of the terpenoid component, resulting in the formation of the tricyclic terpene moiety seen in predecaturin E. The cytochrome P450 monooxygenase then catalyzes the allylic oxidation of predecaturin E, which is followed by spirocylization with concomitant loss of one molecule of water to form decaturin E. Decaturin E is the substrate of the cytochrome P450 monooxygenase olcJ which hydroxylates it at the C-29 position to form decaturin F. The short-chain dehydrogenase/reductase olcF may catalyze the oxidation of decaturin F to generate the 29-hydroxyl-27-one intermediate, and subsequent hemiacetal formation probably leads to the formation of decaturin C. The dioxygenase olcK may be a peroxisomal enzyme that catalyzes the hydroxylation of decaturin C into decaturin A once decaturin C is shuttled into the peroxisome by the MFS transporter olcL. Finally the cytochrome P450 monooxygenase olcB catalyzes the oxidative rearrangement to yield 15-deoxyoxalicine B. In the absence of olcJ, decaturin E may be shunted to a pathway in which it is oxidized to a ketone, possibly by olcF, to form decaturin D, which undergoes further allylic oxidation to yield decaturin G. Moreover, in the absence of oclK or oclL, oclB can convert decaturin C into 15-deoxyoxalicine A. This chain is FAD-dependent monooxygenase olcE, found in Penicillium canescens.